We begin with the raw amino-acid sequence, 323 residues long: Tyrosine recombinase XerD (323 aa).

A Core-binding (CB) domain is found at 21 to 106 (AEDDQAIQRF…TLRGFYALCL (86 aa)). Residues 127–317 (SLPKALTESQ…ARQHLQTLHA (191 aa)) form the Tyr recombinase domain. Residues Arg167, Lys191, His269, Arg272, and His295 contribute to the active site. Tyr304 (O-(3'-phospho-DNA)-tyrosine intermediate) is an active-site residue.

This sequence belongs to the 'phage' integrase family. XerD subfamily. In terms of assembly, forms a cyclic heterotetrameric complex composed of two molecules of XerC and two molecules of XerD.

The protein localises to the cytoplasm. In terms of biological role, site-specific tyrosine recombinase, which acts by catalyzing the cutting and rejoining of the recombining DNA molecules. The XerC-XerD complex is essential to convert dimers of the bacterial chromosome into monomers to permit their segregation at cell division. It also contributes to the segregational stability of plasmids. The polypeptide is Tyrosine recombinase XerD (Xanthomonas campestris pv. campestris (strain ATCC 33913 / DSM 3586 / NCPPB 528 / LMG 568 / P 25)).